A 545-amino-acid polypeptide reads, in one-letter code: Glucose-6-phosphate isomerase (545 aa).

Glu351 functions as the Proton donor in the catalytic mechanism. Residues His382 and Lys510 contribute to the active site.

The protein belongs to the GPI family.

The protein localises to the cytoplasm. It carries out the reaction alpha-D-glucose 6-phosphate = beta-D-fructose 6-phosphate. Its pathway is carbohydrate biosynthesis; gluconeogenesis. The protein operates within carbohydrate degradation; glycolysis; D-glyceraldehyde 3-phosphate and glycerone phosphate from D-glucose: step 2/4. Its function is as follows. Catalyzes the reversible isomerization of glucose-6-phosphate to fructose-6-phosphate. This chain is Glucose-6-phosphate isomerase, found in Shewanella halifaxensis (strain HAW-EB4).